The following is a 20-amino-acid chain: Phospholipase A2 II-5b (20 aa).

This sequence belongs to the phospholipase A2 family. Group I subfamily. The cofactor is Ca(2+). Expressed by the venom gland.

Its subcellular location is the secreted. The catalysed reaction is a 1,2-diacyl-sn-glycero-3-phosphocholine + H2O = a 1-acyl-sn-glycero-3-phosphocholine + a fatty acid + H(+). Its function is as follows. Snake venom phospholipase A2 (PLA2) that exhibits weak enzymatic activity. PLA2 catalyzes the calcium-dependent hydrolysis of the 2-acyl groups in 3-sn-phosphoglycerides. This Notechis scutatus scutatus (Mainland tiger snake) protein is Phospholipase A2 II-5b.